A 91-amino-acid polypeptide reads, in one-letter code: C-C motif chemokine 5 (91 aa).

Residues 1-23 (MKVSAATFAILLATATFRAPASA) form the signal peptide. Cystine bridges form between Cys33-Cys57 and Cys34-Cys73.

The protein belongs to the intercrine beta (chemokine CC) family.

Its subcellular location is the secreted. Functionally, chemoattractant for blood monocytes, memory T-helper cells and eosinophils. Causes the release of histamine from basophils and activates eosinophils. May activate several chemokine receptors including CCR1, CCR3, CCR4 and CCR5. May also be an agonist of the G protein-coupled receptor GPR75. Together with GPR75, may play a role in neuron survival through activation of a downstream signaling pathway involving the PI3, Akt and MAP kinases. By activating GPR75 may also play a role in insulin secretion by islet cells. The chain is C-C motif chemokine 5 (CCL5) from Canis lupus familiaris (Dog).